The following is a 241-amino-acid chain: 4-hydroxy-tetrahydrodipicolinate reductase (241 aa).

NAD(+)-binding positions include 80-82 (ATT) and 104-107 (SANM). H136 functions as the Proton donor/acceptor in the catalytic mechanism. H137 contacts (S)-2,3,4,5-tetrahydrodipicolinate. The active-site Proton donor is the K140. 146-147 (GT) contacts (S)-2,3,4,5-tetrahydrodipicolinate.

The protein belongs to the DapB family.

It is found in the cytoplasm. The enzyme catalyses (S)-2,3,4,5-tetrahydrodipicolinate + NAD(+) + H2O = (2S,4S)-4-hydroxy-2,3,4,5-tetrahydrodipicolinate + NADH + H(+). The catalysed reaction is (S)-2,3,4,5-tetrahydrodipicolinate + NADP(+) + H2O = (2S,4S)-4-hydroxy-2,3,4,5-tetrahydrodipicolinate + NADPH + H(+). Its pathway is amino-acid biosynthesis; L-lysine biosynthesis via DAP pathway; (S)-tetrahydrodipicolinate from L-aspartate: step 4/4. Catalyzes the conversion of 4-hydroxy-tetrahydrodipicolinate (HTPA) to tetrahydrodipicolinate. The polypeptide is 4-hydroxy-tetrahydrodipicolinate reductase (Staphylococcus haemolyticus (strain JCSC1435)).